Reading from the N-terminus, the 114-residue chain is Large ribosomal subunit protein uL22 (114 aa).

The protein belongs to the universal ribosomal protein uL22 family. In terms of assembly, part of the 50S ribosomal subunit.

This protein binds specifically to 23S rRNA; its binding is stimulated by other ribosomal proteins, e.g. L4, L17, and L20. It is important during the early stages of 50S assembly. It makes multiple contacts with different domains of the 23S rRNA in the assembled 50S subunit and ribosome. In terms of biological role, the globular domain of the protein is located near the polypeptide exit tunnel on the outside of the subunit, while an extended beta-hairpin is found that lines the wall of the exit tunnel in the center of the 70S ribosome. The chain is Large ribosomal subunit protein uL22 from Streptococcus sanguinis (strain SK36).